The primary structure comprises 275 residues: Ciliary microtubule inner protein 2B (275 aa).

Disordered stretches follow at residues 62–84 (PPIR…RGQE) and 125–169 (EKQG…SPYS). Basic and acidic residues-rich tracts occupy residues 71–84 (EVPR…RGQE) and 125–147 (EKQG…KDQV).

Belongs to the CIMIP2 family. In terms of assembly, microtubule inner protein component of sperm flagellar doublet microtubules. Expressed in airway epithelial cells.

The protein localises to the cytoplasm. Its subcellular location is the cytoskeleton. The protein resides in the cilium axoneme. It localises to the flagellum axoneme. Microtubule inner protein (MIP) part of the dynein-decorated doublet microtubules (DMTs) in cilia axoneme, which is required for motile cilia beating. This Homo sapiens (Human) protein is Ciliary microtubule inner protein 2B.